A 607-amino-acid polypeptide reads, in one-letter code: Elongation factor 4 (607 aa).

The tr-type G domain maps to 11-193 (SKIRNFSIIA…QIVEKVPAPT (183 aa)). GTP-binding positions include 23–28 (DHGKST) and 140–143 (NKID).

This sequence belongs to the TRAFAC class translation factor GTPase superfamily. Classic translation factor GTPase family. LepA subfamily.

Its subcellular location is the cell membrane. The catalysed reaction is GTP + H2O = GDP + phosphate + H(+). In terms of biological role, required for accurate and efficient protein synthesis under certain stress conditions. May act as a fidelity factor of the translation reaction, by catalyzing a one-codon backward translocation of tRNAs on improperly translocated ribosomes. Back-translocation proceeds from a post-translocation (POST) complex to a pre-translocation (PRE) complex, thus giving elongation factor G a second chance to translocate the tRNAs correctly. Binds to ribosomes in a GTP-dependent manner. In Bacillus anthracis (strain CDC 684 / NRRL 3495), this protein is Elongation factor 4.